The following is a 1505-amino-acid chain: Homeobox protein cut-like 1 (1505 aa).

Positions 56 to 407 (LLKSFQGEID…ALRISNSDLS (352 aa)) form a coiled coil. 2 stretches are compositionally biased toward polar residues: residues 396–407 (NAALRISNSDLS) and 440–451 (EQASNTNGTHQF). Disordered regions lie at residues 396–455 (NAAL…SPAG), 512–552 (YSTN…EEMD), 646–669 (PKRR…GSDE), and 682–704 (LQVQ…NSDD). Residues 516–546 (SISSQSPLQQSPDVNGMAPSPSQSESAGSVS) are compositionally biased toward low complexity. Residue Glu540 is modified to Phosphoserine. A DNA-binding region (CUT 1) is located at residues 542 to 629 (AGSVSEGEEM…ILALRSIQGR (88 aa)). Over residues 694-703 (SSASGSGNSD) the composition is skewed to low complexity. The residue at position 763 (Ser763) is a Phosphoserine. Residues 768–802 (SAAPEAGASALPNPPALKKEAQDAPGLDPQGAADC) are disordered. Residues Lys785, Lys811, and Lys842 each participate in a glycyl lysine isopeptide (Lys-Gly) (interchain with G-Cter in SUMO2) cross-link. Basic and acidic residues predominate over residues 815–853 (GRSGAWKDHWWSAVQPERRNAASSEEAKAEETGGGKEKG). The disordered stretch occupies residues 815-930 (GRSGAWKDHW…KPTKPSVPPL (116 aa)). 2 stretches are compositionally biased toward polar residues: residues 868–877 (SQLQGPSSSE) and 887–911 (SPYS…NSPL). Ser909 is subject to Phosphoserine. Residues 934–1021 (QYEVYMYQEV…QGVLPVQGQQ (88 aa)) constitute a DNA-binding region (CUT 2). Residues 1036 to 1049 (LQQGCVSSESTPKT) are compositionally biased toward polar residues. Residues 1036–1110 (LQQGCVSSES…QPTTPLPLSG (75 aa)) are disordered. Residues 1050-1066 (SASCSPAPESPMSSSES) are compositionally biased toward low complexity. Residues Ser1059 and Ser1069 each carry the phosphoserine modification. Positions 1117-1204 (QELVAMSPEL…VEKLMDMKRM (88 aa)) form a DNA-binding region, CUT 3. Residues 1210-1247 (MKRRHSSVSDSQPCEPPSVGTEYSQGASPQPQHQLKKP) are disordered. Residues 1230 to 1242 (TEYSQGASPQPQH) are compositionally biased toward polar residues. The homeobox DNA-binding region spans 1244–1303 (LKKPRVVLAPEEKEALKRAYQQKPYPSPKTIEDLATQLNLKTSTVINWFHNYRSRIRREL). Phosphoserine is present on Ser1270. Lys1284 participates in a covalent cross-link: Glycyl lysine isopeptide (Lys-Gly) (interchain with G-Cter in SUMO2). The interval 1312 to 1480 (SQGQAGASDS…SRDNPLRKKK (169 aa)) is disordered. Residues 1316 to 1333 (AGASDSPSARSGRAAPSS) are compositionally biased toward low complexity. Ser1337 bears the Phosphoserine mark. 2 stretches are compositionally biased toward basic and acidic residues: residues 1353-1368 (EEPK…EVPR) and 1384-1394 (DDARDDDHEGG). Composition is skewed to low complexity over residues 1405–1436 (PASA…AAPS) and 1443–1455 (NSSS…RPSS). The residue at position 1455 (Ser1455) is a Phosphoserine. Positions 1467 to 1476 (GARDSRDNPL) are enriched in basic and acidic residues. Residues Ser1486 and Ser1496 each carry the phosphoserine modification.

Belongs to the CUT homeobox family. Interacts with BANP. Interacts with SATB1 (via DNA-binding domains); the interaction inhibits the attachment of both proteins to DNA. Post-translationally, phosphorylated by PKA. In terms of processing, as cells progress into S phase, a fraction of CUX1 molecules is proteolytically processed into N-terminally truncated proteins of 110 kDa by CTSL. Cell cycle-dependent processing of CUX1 serves to generate a CDP/Cux p110 with distinct DNA binding and transcriptional properties.

The protein resides in the nucleus. Its function is as follows. Transcription factor involved in the control of neuronal differentiation in the brain. Regulates dendrite development and branching, and dendritic spine formation in cortical layers II-III. Also involved in the control of synaptogenesis. In addition, it has probably a broad role in mammalian development as a repressor of developmentally regulated gene expression. May act by preventing binding of positively-activing CCAAT factors to promoters. Component of nf-munr repressor; binds to the matrix attachment regions (MARs) (5' and 3') of the immunoglobulin heavy chain enhancer. Represses T-cell receptor (TCR) beta enhancer function by binding to MARbeta, an ATC-rich DNA sequence located upstream of the TCR beta enhancer. Binds to the TH enhancer; may require the basic helix-loop-helix protein TCF4 as a coactivator. In terms of biological role, plays a role in cell cycle progression, in particular at the G1/S transition. As cells progress into S phase, a fraction of CUX1 molecules is proteolytically processed into N-terminally truncated proteins of 110 kDa. While CUX1 only transiently binds to DNA and carries the CCAAT-displacement activity, CDP/Cux p110 makes a stable interaction with DNA and stimulates expression of genes such as POLA1. This chain is Homeobox protein cut-like 1, found in Homo sapiens (Human).